The chain runs to 283 residues: Pantothenate synthetase (283 aa).

31–38 (MGALHDGH) contacts ATP. The active-site Proton donor is the histidine 38. (R)-pantoate is bound at residue glutamine 62. Glutamine 62 contributes to the beta-alanine binding site. 148–151 (GKKD) is a binding site for ATP. Position 154 (glutamine 154) interacts with (R)-pantoate. ATP-binding positions include valine 177 and 185–188 (KSSR).

Belongs to the pantothenate synthetase family. In terms of assembly, homodimer.

The protein resides in the cytoplasm. It catalyses the reaction (R)-pantoate + beta-alanine + ATP = (R)-pantothenate + AMP + diphosphate + H(+). It functions in the pathway cofactor biosynthesis; (R)-pantothenate biosynthesis; (R)-pantothenate from (R)-pantoate and beta-alanine: step 1/1. In terms of biological role, catalyzes the condensation of pantoate with beta-alanine in an ATP-dependent reaction via a pantoyl-adenylate intermediate. This Staphylococcus aureus (strain Mu3 / ATCC 700698) protein is Pantothenate synthetase.